Here is a 377-residue protein sequence, read N- to C-terminus: MAVSFVTTSPEEEDKPKLGLGNIQTPLIFNPSMLNLQANIPNQFIWPDDEKPSINVLELDVPLIDLQNLLSDPSSTLDASRLISEACKKHGFFLVVNHGISEELISDAHEYTSRFFDMPLSEKQRVLRKSGESVGYASSFTGRFSTKLPWKETLSFRFCDDMSRSKSVQDYFCDALGHGFQPFGKVYQEYCEAMSSLSLKIMELLGLSLGVKRDYFREFFEENDSIMRLNYYPPCIKPDLTLGTGPHCDPTSLTILHQDHVNGLQVFVENQWRSIRPNPKAFVVNIGDTFMALSNDRYKSCLHRAVVNSESERKSLAFFLCPKKDRVVTPPRELLDSITSRRYPDFTWSMFLEFTQKHYRADMNTLQAFSDWLTKPI.

The region spanning 222–322 (ENDSIMRLNY…RKSLAFFLCP (101 aa)) is the Fe2OG dioxygenase domain. Residues His247, Asp249, and His303 each coordinate Fe cation. Residue Arg313 is part of the active site.

Belongs to the iron/ascorbate-dependent oxidoreductase family. GA20OX subfamily. It depends on Fe(2+) as a cofactor. The cofactor is L-ascorbate. In terms of tissue distribution, highly expressed in stems and inflorescence tissues. Detected in seeds, roots, leaves and siliques.

The catalysed reaction is gibberellin A12 + 2 2-oxoglutarate + 3 O2 + H(+) = gibberellin A9 + 2 succinate + 3 CO2 + 2 H2O. The enzyme catalyses gibberellin A12 + 2-oxoglutarate + O2 = gibberellin A15 + succinate + CO2. It carries out the reaction gibberellin A15 + 2-oxoglutarate + O2 = gibberellin A24 + succinate + CO2 + H2O. It catalyses the reaction gibberellin A53 + 2-oxoglutarate + O2 = gibberellin A44 + succinate + CO2. Its pathway is plant hormone biosynthesis; gibberellin biosynthesis. Its function is as follows. Key oxidase enzyme in the biosynthesis of gibberellin that catalyzes the conversion of GA12 to GA9, via a three-step oxidation at C-20 of the GA skeleton. GA53 is less effectively oxidized than GA12 and is only oxidized one step to GA44. Involved in the promotion of the floral transition, fertility and silique elongation, but plays only a minor role in elongation of seedling organs. Acts redundantly with GA20OX2. This Arabidopsis thaliana (Mouse-ear cress) protein is Gibberellin 20 oxidase 1 (GA20OX1).